An 87-amino-acid chain; its full sequence is MDALNSKEQQEFQKVVEQKQMKDFMRLYSNLVERCFTDCVNDFTTSKLTNKEQTCIMKCSEKFLKHSERVGQRFQEQNAALGQGLGR.

M1 carries the N-acetylmethionine modification. Residues 35–59 (CFTDCVNDFTTSKLTNKEQTCIMKC) carry the Twin CX3C motif motif. Intrachain disulfides connect C35-C59 and C39-C55.

It belongs to the small Tim family. In terms of assembly, heterohexamer; composed of 3 copies of TIM9 and 3 copies of TIM10, named soluble 70 kDa complex. Associates with the TIM12 component of the TIM22 complex, whose core is composed of TIM18, TIM22 and TIM54. Interacts with the transmembrane regions of multi-pass transmembrane proteins in transit.

The protein resides in the mitochondrion inner membrane. The protein localises to the mitochondrion intermembrane space. Mitochondrial intermembrane chaperone that participates in the import and insertion of multi-pass transmembrane proteins into the mitochondrial inner membrane. Also required for the transfer of beta-barrel precursors from the TOM complex to the sorting and assembly machinery (SAM complex) of the outer membrane. Acts as a chaperone-like protein that protects the hydrophobic precursors from aggregation and guide them through the mitochondrial intermembrane space. Compared to TIM10, it may have a strong structural role. This is Mitochondrial import inner membrane translocase subunit TIM9 (TIM9) from Saccharomyces cerevisiae (strain ATCC 204508 / S288c) (Baker's yeast).